We begin with the raw amino-acid sequence, 232 residues long: Ubiquinone biosynthesis O-methyltransferase (232 aa).

Residues R36, G55, D76, and L120 each contribute to the S-adenosyl-L-methionine site.

The protein belongs to the methyltransferase superfamily. UbiG/COQ3 family.

It catalyses the reaction a 3-demethylubiquinol + S-adenosyl-L-methionine = a ubiquinol + S-adenosyl-L-homocysteine + H(+). The enzyme catalyses a 3-(all-trans-polyprenyl)benzene-1,2-diol + S-adenosyl-L-methionine = a 2-methoxy-6-(all-trans-polyprenyl)phenol + S-adenosyl-L-homocysteine + H(+). Its pathway is cofactor biosynthesis; ubiquinone biosynthesis. In terms of biological role, O-methyltransferase that catalyzes the 2 O-methylation steps in the ubiquinone biosynthetic pathway. The chain is Ubiquinone biosynthesis O-methyltransferase from Pseudomonas putida (strain GB-1).